The sequence spans 353 residues: Mitogen-activated protein kinase mpkB (353 aa).

The region spanning 21–309 (YEIQDVIGEG…VEEALRHPYL (289 aa)) is the Protein kinase domain. Residues 27–35 (IGEGAYGVV) and lysine 50 each bind ATP. Aspartate 145 acts as the Proton acceptor in catalysis.

Belongs to the protein kinase superfamily. Ser/Thr protein kinase family. MAP kinase subfamily. Requires Mg(2+) as cofactor.

It localises to the nucleus. It catalyses the reaction L-seryl-[protein] + ATP = O-phospho-L-seryl-[protein] + ADP + H(+). The catalysed reaction is L-threonyl-[protein] + ATP = O-phospho-L-threonyl-[protein] + ADP + H(+). Activated by threonine and tyrosine phosphorylation. Mitogen-activated protein kinase (MAPK) that plays a role in conidiation and regulation of secondary metabolite biosynthesis. Acts as a repressor of dihydroxynaphthalene (DHN)-melanin production. The chain is Mitogen-activated protein kinase mpkB from Aspergillus fumigatus (strain CBS 144.89 / FGSC A1163 / CEA10) (Neosartorya fumigata).